Here is a 475-residue protein sequence, read N- to C-terminus: Phosphoethanolamine N-methyltransferase 1 (475 aa).

Belongs to the class I-like SAM-binding methyltransferase superfamily.

The catalysed reaction is phosphoethanolamine + S-adenosyl-L-methionine = N-methylethanolamine phosphate + S-adenosyl-L-homocysteine + H(+). Its pathway is phospholipid metabolism; phosphatidylcholine biosynthesis; phosphocholine from phosphoethanolamine. Feedback inhibition by phosphatidylcholine. In terms of biological role, catalyzes the first step in the synthesis of phosphocholine by converting phosphoethanolamine into phospho-monomethylethanolamine (N-methylethanolamine phosphate). Phosphocholine is a precursor for phosphatidylcholine, a major component in membranes and a precursor itself in the production of glycoconjugates secreted by parasitic nematodes to avoid host immune responses. This is Phosphoethanolamine N-methyltransferase 1 from Caenorhabditis elegans.